The following is a 541-amino-acid chain: Pseudokinase FAM20A (541 aa).

The N-terminal stretch at 1-33 (MPGLRRDRLLALLLLGALFSADLYFHLWPQVQR) is a signal peptide. N-linked (GlcNAc...) asparagine glycosylation is found at Asn-70, Asn-145, and Asn-287. Cystine bridges form between Cys-314–Cys-330, Cys-319–Cys-323, Cys-378–Cys-452, and Cys-453–Cys-512. N-linked (GlcNAc...) asparagine glycosylation occurs at Asn-388. Asn-538 is a glycosylation site (N-linked (GlcNAc...) asparagine).

This sequence belongs to the FAM20 family. In terms of assembly, interacts with FAM20C; probably forming a heterotetramer of 2 subunits of FAM20A and 2 subunits of FAM20C. In terms of processing, N-glycosylated. In the mammary gland, expressed at higher levels in lactating mice than in virgin mice. Observed throughout the tissues of the mandibular incisor, including the secretory and maturation stage ameloblasts, the suprabasal layers of the gingival epithelium and the odontoblasts. Weak expression in the enamel matrix.

It is found in the secreted. The protein resides in the golgi apparatus. Its subcellular location is the endoplasmic reticulum. Functionally, pseudokinase that acts as an allosteric activator of the Golgi serine/threonine protein kinase FAM20C and is involved in biomineralization of teeth. Forms a complex with FAM20C and increases the ability of FAM20C to phosphorylate the proteins that form the 'matrix' that guides the deposition of the enamel minerals. This Mus musculus (Mouse) protein is Pseudokinase FAM20A.